The primary structure comprises 435 residues: Elongation factor 1-alpha (435 aa).

The tr-type G domain occupies 4–229 (KPHLNLIVIG…DMLEIPPKPV (226 aa)). The interval 13–20 (GHVDHGKS) is G1. A GTP-binding site is contributed by 13 to 20 (GHVDHGKS). Ser-20 contacts Mg(2+). The G2 stretch occupies residues 69-73 (GVTIN). Positions 90–93 (DAPG) are G3. Residues 90–94 (DAPGH) and 152–155 (TKMD) contribute to the GTP site. A G4 region spans residues 152 to 155 (TKMD). The tract at residues 193 to 195 (VSI) is G5.

Belongs to the TRAFAC class translation factor GTPase superfamily. Classic translation factor GTPase family. EF-Tu/EF-1A subfamily.

It is found in the cytoplasm. It carries out the reaction GTP + H2O = GDP + phosphate + H(+). Its function is as follows. GTP hydrolase that promotes the GTP-dependent binding of aminoacyl-tRNA to the A-site of ribosomes during protein biosynthesis. The protein is Elongation factor 1-alpha of Metallosphaera sedula (strain ATCC 51363 / DSM 5348 / JCM 9185 / NBRC 15509 / TH2).